We begin with the raw amino-acid sequence, 396 residues long: Polygalacturonase (396 aa).

The signal sequence occupies residues 1 to 22 (MDLKFKVHFALVLLFLAHFGES). N-linked (GlcNAc...) asparagine glycans are attached at residues Asn-143, Asn-151, Asn-174, Asn-181, Asn-203, and Asn-208. PbH1 repeat units follow at residues 172 to 198 (CKNLTFIRFNVSAPANSPNTDGIHVSR) and 199 to 220 (SSSVNITDSNFSTGDDCISVGD). Asp-213 acts as the Proton donor in catalysis. Residues Cys-215 and Cys-232 are joined by a disulfide bond. The active site involves His-236. 3 PbH1 repeats span residues 252–273 (VVGVFVRNCTFTNTDNGVRIKT), 282–303 (VNDVHFEDIIVQNVSNPVVIDQ), and 316–356 (PSQV…EVGD). 2 N-linked (GlcNAc...) asparagine glycosylation sites follow: Asn-259 and Asn-294. Residues 364–396 (KEGPAKSSCENIKPSLKGKQNPPVCTASAASSS) are disordered. A disulfide bridge links Cys-372 with Cys-388.

Belongs to the glycosyl hydrolase 28 family. Pollen.

It is found in the secreted. The protein resides in the cell wall. It catalyses the reaction (1,4-alpha-D-galacturonosyl)n+m + H2O = (1,4-alpha-D-galacturonosyl)n + (1,4-alpha-D-galacturonosyl)m.. In terms of biological role, may function in depolymerizing pectin during pollen development, germination, and tube growth. This is Polygalacturonase (PG1) from Nicotiana tabacum (Common tobacco).